Consider the following 101-residue polypeptide: Small ribosomal subunit protein uS10 (101 aa).

The protein belongs to the universal ribosomal protein uS10 family. Part of the 30S ribosomal subunit.

Its function is as follows. Involved in the binding of tRNA to the ribosomes. The protein is Small ribosomal subunit protein uS10 of Parabacteroides distasonis (strain ATCC 8503 / DSM 20701 / CIP 104284 / JCM 5825 / NCTC 11152).